The chain runs to 127 residues: uncharacterized protein (127 aa).

Disordered stretches follow at residues 1–22 (MLPA…KMKG) and 53–106 (LVGK…PGPK). Over residues 76-95 (PNGEAHAEQARRKISVEEKQ) the composition is skewed to basic and acidic residues.

The protein resides in the mitochondrion. This is an uncharacterized protein from Arabidopsis thaliana (Mouse-ear cress).